The sequence spans 751 residues: Semaphorin-3C (751 aa).

Residues 1 to 21 form the signal peptide; sequence MAFRTICVLVGVFICSICVKG. The region spanning 28–511 is the Sema domain; the sequence is RVYLTFDELR…SNEGVSQVSL (484 aa). An N-linked (GlcNAc...) asparagine glycan is attached at Asn-81. An intrachain disulfide couples Cys-101 to Cys-112. Asn-123 is a glycosylation site (N-linked (GlcNAc...) asparagine). Cys-130 and Cys-139 are oxidised to a cystine. 2 N-linked (GlcNAc...) asparagine glycosylation sites follow: Asn-252 and Asn-268. 2 cysteine pairs are disulfide-bonded: Cys-266–Cys-378 and Cys-290–Cys-338. Residue Asn-465 is glycosylated (N-linked (GlcNAc...) asparagine). A disulfide bridge links Cys-514 with Cys-532. Residues 571–655 form the Ig-like C2-type domain; it reads AYRNAAEIVQ…TENSFKQTIA (85 aa). Residues Asn-585 and Asn-586 are each glycosylated (N-linked (GlcNAc...) asparagine). Residues Cys-592 and Cys-643 are joined by a disulfide bond. A compositionally biased stretch (basic and acidic residues) spans 712–731; sequence TRQQHQQGDESQKMRGDYGK. The disordered stretch occupies residues 712 to 751; sequence TRQQHQQGDESQKMRGDYGKLKALINSRKSRNRRNQLPES.

Belongs to the semaphorin family. Interacts with PLXND1.

The protein localises to the secreted. Functionally, binds to plexin family members and plays an important role in the regulation of developmental processes. Required for normal cardiovascular development during embryogenesis. Functions as attractant for growing axons, and thereby plays an important role in axon growth and axon guidance. The chain is Semaphorin-3C (SEMA3C) from Pongo abelii (Sumatran orangutan).